Consider the following 1935-residue polypeptide: Myosin-7 (1935 aa).

Residues 32–81 (DLKKDVFVPDDKQEFVKAKIVSREGGKVTAETEYGKTVTVKEDQVMQQNP) form the Myosin N-terminal SH3-like domain. The 694-residue stretch at 85–778 (DKIEDMAMLT…LLGLLEEMRD (694 aa)) folds into the Myosin motor domain. At K129 the chain carries N6,N6,N6-trimethyllysine. 178–185 (GESGAGKT) is a binding site for ATP. Phosphothreonine is present on T378. Actin-binding stretches follow at residues 655–677 (LNKLMTNLRSTHPHFVRCIIPNE) and 757–771 (KFGHTKVFFKAGLLG). The IQ domain maps to 781-810 (LSRIITRIQAQSRGVLARMEYKKLLERRDS). A coiled-coil region spans residues 839 to 1935 (LLKSAEREKE…DIGTKGLNEE (1097 aa)). Residues S1137 and S1269 each carry the phosphoserine modification. The residue at position 1282 (T1282) is a Phosphothreonine. Phosphotyrosine is present on Y1308. T1309 is subject to Phosphothreonine. S1510 is modified (phosphoserine). The residue at position 1513 (T1513) is a Phosphothreonine. Positions 1907 to 1935 (EERADIAESQVNKLRAKSRDIGTKGLNEE) are disordered. A compositionally biased stretch (basic and acidic residues) spans 1923–1935 (KSRDIGTKGLNEE).

It belongs to the TRAFAC class myosin-kinesin ATPase superfamily. Myosin family. Muscle myosin is a hexameric protein that consists of 2 heavy chain subunits (MHC), 2 alkali light chain subunits (MLC) and 2 regulatory light chain subunits (MLC-2). Interacts with ECPAS. Interacts (via C-terminus) with LRRC39. Both wild type and variant Gln-403 are detected in skeletal muscle (at protein level).

The protein resides in the cytoplasm. The protein localises to the myofibril. Its subcellular location is the sarcomere. Myosins are actin-based motor molecules with ATPase activity essential for muscle contraction. Forms regular bipolar thick filaments that, together with actin thin filaments, constitute the fundamental contractile unit of skeletal and cardiac muscle. In Homo sapiens (Human), this protein is Myosin-7 (MYH7).